The following is a 190-amino-acid chain: dTTP/UTP pyrophosphatase (190 aa).

D68 serves as the catalytic Proton acceptor.

Belongs to the Maf family. YhdE subfamily. A divalent metal cation serves as cofactor.

Its subcellular location is the cytoplasm. It catalyses the reaction dTTP + H2O = dTMP + diphosphate + H(+). The catalysed reaction is UTP + H2O = UMP + diphosphate + H(+). Nucleoside triphosphate pyrophosphatase that hydrolyzes dTTP and UTP. May have a dual role in cell division arrest and in preventing the incorporation of modified nucleotides into cellular nucleic acids. This is dTTP/UTP pyrophosphatase from Acholeplasma laidlawii (strain PG-8A).